A 54-amino-acid chain; its full sequence is IATVDCSDYPKPVCSLEDMPLCGSDSKTYSNKCNFCNAVVDSNGTLTLSHFGKC.

The 51-residue stretch at 4 to 54 (VDCSDYPKPVCSLEDMPLCGSDSKTYSNKCNFCNAVVDSNGTLTLSHFGKC) folds into the Kazal-like domain. Intrachain disulfides connect C6–C36, C14–C33, and C22–C54. An N-linked (GlcNAc...) asparagine glycan is attached at N43.

It localises to the secreted. In Vultur gryphus (Andean condor), this protein is Ovomucoid.